The primary structure comprises 322 residues: tRNA uridine(34) hydroxylase (322 aa).

A Rhodanese domain is found at 125-219 (QDPDTIVIDA…YGKDPEVKGQ (95 aa)). The active-site Cysteine persulfide intermediate is the cysteine 179.

The protein belongs to the TrhO family.

The catalysed reaction is uridine(34) in tRNA + AH2 + O2 = 5-hydroxyuridine(34) in tRNA + A + H2O. Catalyzes oxygen-dependent 5-hydroxyuridine (ho5U) modification at position 34 in tRNAs. This is tRNA uridine(34) hydroxylase from Bacillus velezensis (strain DSM 23117 / BGSC 10A6 / LMG 26770 / FZB42) (Bacillus amyloliquefaciens subsp. plantarum).